The primary structure comprises 409 residues: Peptidase T (409 aa).

Residue histidine 78 coordinates Zn(2+). The active site involves aspartate 80. Aspartate 140 contacts Zn(2+). Glutamate 174 (proton acceptor) is an active-site residue. Positions 175, 197, and 379 each coordinate Zn(2+).

It belongs to the peptidase M20B family. Zn(2+) is required as a cofactor.

Its subcellular location is the cytoplasm. The enzyme catalyses Release of the N-terminal residue from a tripeptide.. Functionally, cleaves the N-terminal amino acid of tripeptides. The protein is Peptidase T of Aliivibrio fischeri (strain ATCC 700601 / ES114) (Vibrio fischeri).